Reading from the N-terminus, the 401-residue chain is Carbamoyl phosphate synthase small chain (401 aa).

Positions 1–203 (MTATPAWTIQ…EGYSTLGETD (203 aa)) are CPSase. The L-glutamine site is built by serine 56, glycine 255, and glycine 257. The 189-residue stretch at 207–395 (HVVALDYGVK…LNLIREKKGE (189 aa)) folds into the Glutamine amidotransferase type-1 domain. The Nucleophile role is filled by cysteine 284. L-glutamine-binding residues include leucine 285, glutamine 288, asparagine 326, glycine 328, and phenylalanine 329. Catalysis depends on residues histidine 368 and glutamate 370.

This sequence belongs to the CarA family. In terms of assembly, composed of two chains; the small (or glutamine) chain promotes the hydrolysis of glutamine to ammonia, which is used by the large (or ammonia) chain to synthesize carbamoyl phosphate. Tetramer of heterodimers (alpha,beta)4.

It catalyses the reaction hydrogencarbonate + L-glutamine + 2 ATP + H2O = carbamoyl phosphate + L-glutamate + 2 ADP + phosphate + 2 H(+). It carries out the reaction L-glutamine + H2O = L-glutamate + NH4(+). It functions in the pathway amino-acid biosynthesis; L-arginine biosynthesis; carbamoyl phosphate from bicarbonate: step 1/1. Its pathway is pyrimidine metabolism; UMP biosynthesis via de novo pathway; (S)-dihydroorotate from bicarbonate: step 1/3. In terms of biological role, small subunit of the glutamine-dependent carbamoyl phosphate synthetase (CPSase). CPSase catalyzes the formation of carbamoyl phosphate from the ammonia moiety of glutamine, carbonate, and phosphate donated by ATP, constituting the first step of 2 biosynthetic pathways, one leading to arginine and/or urea and the other to pyrimidine nucleotides. The small subunit (glutamine amidotransferase) binds and cleaves glutamine to supply the large subunit with the substrate ammonia. In Rhizobium meliloti (strain 1021) (Ensifer meliloti), this protein is Carbamoyl phosphate synthase small chain.